We begin with the raw amino-acid sequence, 245 residues long: Transmembrane and ubiquitin-like domain-containing protein 1 (245 aa).

A required to release iHOPS from membranes region spans residues 2 to 30; that stretch reads ALIEGVGDEVTVLFAVLACLLVLALAWVS. A helical membrane pass occupies residues 11–31; the sequence is VTVLFAVLACLLVLALAWVST. The disordered stretch occupies residues 33-100; it reads TTESTDPQPQ…ASTPPDSPQE (68 aa). A phosphoserine mark is found at Ser-73, Ser-97, and Ser-126. The Ubiquitin-like domain maps to 102–175; the sequence is LLLRLKFLND…LHCHVSTRVG (74 aa). The next 2 helical transmembrane spans lie at 194-214 and 219-239; these read IGSL…YCQI and FFPL…SLLA.

Interacts with EEF1A1, CAMLG, GRIA2 and GRIP1. Interacts with NPM1 and CDKN2A; TMUB1 can enhance interaction between NPM1 and CDKN2A and is proposed to bridge the proteins; proposed to be mediated by iHOPS. Interacts with TUBG1. Interacts with ERLIN2 and AMFR; TMUB1 promotes the interaction of ERLIN2 with AMFR. Isoform 1 (lHOPS) is processed by regulated intramembrane proteolysis (RIP) in the N-terminus to release iHOPS from membranes. In terms of processing, isoform 2 seems to undergo a selective cleavage in the C-terminal region to release an additional cytoplasmic form. Expressed in adult brain; at protein level. Isoform 1 (lHOPS) is highly expressed in small intestine, stomach and epididymis. Isoform 2 (sHOPS) and iHOPS are abundantly expressed in brain, liver and adrenal gland.

The protein localises to the membrane. It is found in the postsynaptic cell membrane. The protein resides in the recycling endosome. Its subcellular location is the cytoplasm. It localises to the nucleus. The protein localises to the nucleolus. It is found in the cytoskeleton. The protein resides in the microtubule organizing center. Its subcellular location is the centrosome. Functionally, involved in sterol-regulated ubiquitination and degradation of HMG-CoA reductase HMGCR. Involved in positive regulation of AMPA-selective glutamate receptor GRIA2 recycling to the cell surface. Acts as a negative regulator of hepatocyte growth during regeneration. Its function is as follows. May contribute to the regulation of translation during cell-cycle progression. May contribute to the regulation of cell proliferation. May be involved in centrosome assembly. Modulates stabilization and nucleolar localization of tumor suppressor CDKN2A and enhances association between CDKN2A and NPM1. The polypeptide is Transmembrane and ubiquitin-like domain-containing protein 1 (Tmub1) (Mus musculus (Mouse)).